The following is a 388-amino-acid chain: Flap endonuclease 1 (388 aa).

An N-domain region spans residues 1-104 (MGILGLSKLI…GELAKRAERR (104 aa)). Position 34 (D34) interacts with Mg(2+). Positions 47 and 70 each coordinate DNA. The Mg(2+) site is built by D86, E158, E160, D179, and D181. An I-domain region spans residues 122-253 (QIEKFNRRLV…KRAIELIKSY (132 aa)). E158 is a DNA binding site. Residues G231 and D233 each contribute to the DNA site. Residue D233 participates in Mg(2+) binding. An interaction with PCNA region spans residues 336 to 344 (TQVRLDSFF). Residues 355–388 (AAAKRKAEESKKSANSKKAKIGGGSGAGRGRRPK) form a disordered region.

This sequence belongs to the XPG/RAD2 endonuclease family. FEN1 subfamily. In terms of assembly, interacts with PCNA. Three molecules of FEN1 bind to one PCNA trimer with each molecule binding to one PCNA monomer. PCNA stimulates the nuclease activity without altering cleavage specificity. Mg(2+) serves as cofactor. In terms of processing, phosphorylated. Phosphorylation upon DNA damage induces relocalization to the nuclear plasma.

The protein resides in the nucleus. Its subcellular location is the nucleolus. The protein localises to the nucleoplasm. It is found in the mitochondrion. Functionally, structure-specific nuclease with 5'-flap endonuclease and 5'-3' exonuclease activities involved in DNA replication and repair. During DNA replication, cleaves the 5'-overhanging flap structure that is generated by displacement synthesis when DNA polymerase encounters the 5'-end of a downstream Okazaki fragment. It enters the flap from the 5'-end and then tracks to cleave the flap base, leaving a nick for ligation. Also involved in the long patch base excision repair (LP-BER) pathway, by cleaving within the apurinic/apyrimidinic (AP) site-terminated flap. Acts as a genome stabilization factor that prevents flaps from equilibrating into structures that lead to duplications and deletions. Also possesses 5'-3' exonuclease activity on nicked or gapped double-stranded DNA, and exhibits RNase H activity. Also involved in replication and repair of rDNA and in repairing mitochondrial DNA. The sequence is that of Flap endonuclease 1 from Drosophila grimshawi (Hawaiian fruit fly).